A 557-amino-acid chain; its full sequence is Dihydroxy-acid dehydratase (557 aa).

Asp78 serves as a coordination point for Mg(2+). [2Fe-2S] cluster is bound at residue Cys119. Mg(2+) contacts are provided by Asp120 and Lys121. The residue at position 121 (Lys121) is an N6-carboxylysine. A [2Fe-2S] cluster-binding site is contributed by Cys192. Glu442 serves as a coordination point for Mg(2+). The active-site Proton acceptor is the Ser468.

It belongs to the IlvD/Edd family. In terms of assembly, homodimer. The cofactor is [2Fe-2S] cluster. Mg(2+) is required as a cofactor.

The enzyme catalyses (2R)-2,3-dihydroxy-3-methylbutanoate = 3-methyl-2-oxobutanoate + H2O. The catalysed reaction is (2R,3R)-2,3-dihydroxy-3-methylpentanoate = (S)-3-methyl-2-oxopentanoate + H2O. The protein operates within amino-acid biosynthesis; L-isoleucine biosynthesis; L-isoleucine from 2-oxobutanoate: step 3/4. It functions in the pathway amino-acid biosynthesis; L-valine biosynthesis; L-valine from pyruvate: step 3/4. In terms of biological role, functions in the biosynthesis of branched-chain amino acids. Catalyzes the dehydration of (2R,3R)-2,3-dihydroxy-3-methylpentanoate (2,3-dihydroxy-3-methylvalerate) into 2-oxo-3-methylpentanoate (2-oxo-3-methylvalerate) and of (2R)-2,3-dihydroxy-3-methylbutanoate (2,3-dihydroxyisovalerate) into 2-oxo-3-methylbutanoate (2-oxoisovalerate), the penultimate precursor to L-isoleucine and L-valine, respectively. The chain is Dihydroxy-acid dehydratase from Bacillus anthracis (strain A0248).